We begin with the raw amino-acid sequence, 639 residues long: 3D-(3,5/4)-trihydroxycyclohexane-1,2-dione hydrolase (639 aa).

Glu62 is a binding site for thiamine diphosphate. Residues 438-518 (SLPGDLQRMW…INILLFDNCG (81 aa)) are thiamine pyrophosphate binding. Residues Asp489 and Asn516 each coordinate Mg(2+).

This sequence belongs to the TPP enzyme family. Requires Mg(2+) as cofactor. Thiamine diphosphate is required as a cofactor.

It catalyses the reaction 3D-3,5/4-trihydroxycyclohexane-1,2-dione + H2O = 5-deoxy-D-glucuronate + H(+). It participates in polyol metabolism; myo-inositol degradation into acetyl-CoA; acetyl-CoA from myo-inositol: step 3/7. Involved in the cleavage of the C1-C2 bond of 3D-(3,5/4)-trihydroxycyclohexane-1,2-dione (THcHDO) to yield 5-deoxy-glucuronate (5DG). The chain is 3D-(3,5/4)-trihydroxycyclohexane-1,2-dione hydrolase from Clostridium perfringens (strain 13 / Type A).